We begin with the raw amino-acid sequence, 422 residues long: Trigger factor (422 aa).

One can recognise a PPIase FKBP-type domain in the interval 158-242 (GDFAVVSLES…VKGLRKKELP (85 aa)).

It belongs to the FKBP-type PPIase family. Tig subfamily.

It is found in the cytoplasm. It catalyses the reaction [protein]-peptidylproline (omega=180) = [protein]-peptidylproline (omega=0). Its function is as follows. Involved in protein export. Acts as a chaperone by maintaining the newly synthesized protein in an open conformation. Functions as a peptidyl-prolyl cis-trans isomerase. This is Trigger factor from Solibacter usitatus (strain Ellin6076).